We begin with the raw amino-acid sequence, 523 residues long: Cyclin-dependent kinase 17 (523 aa).

Serine 9 is modified (phosphoserine). Positions 30 to 55 (TIEENSSKDNEPIVKNGRPPTSHSMH) are disordered. A phosphoserine mark is found at serine 80, serine 92, and serine 105. Positions 103-123 (MGSDGESDQASGTSSDEVQSP) are disordered. Over residues 110–123 (DQASGTSSDEVQSP) the composition is skewed to polar residues. Residues serine 137, serine 146, serine 165, and serine 180 each carry the phosphoserine modification. Positions 192–473 (YIKLEKLGEG…AEEAMKHVYF (282 aa)) constitute a Protein kinase domain. ATP-binding positions include 198-206 (LGEGTYATV) and lysine 221. Aspartate 313 functions as the Proton acceptor in the catalytic mechanism. The interval 501–523 (PGFRNSSYPETGHGKNRRQSMLF) is disordered. Positions 514–523 (GKNRRQSMLF) are enriched in basic residues.

This sequence belongs to the protein kinase superfamily. CMGC Ser/Thr protein kinase family. CDC2/CDKX subfamily. In terms of assembly, found in a complex containing CABLES1, CDK16 and TDRD7. Interacts with TDRD7.

The enzyme catalyses L-seryl-[protein] + ATP = O-phospho-L-seryl-[protein] + ADP + H(+). It carries out the reaction L-threonyl-[protein] + ATP = O-phospho-L-threonyl-[protein] + ADP + H(+). May play a role in terminally differentiated neurons. Has a Ser/Thr-phosphorylating activity for histone H1. The protein is Cyclin-dependent kinase 17 (CDK17) of Homo sapiens (Human).